The following is a 913-amino-acid chain: Eukaryotic translation initiation factor 3 subunit C (913 aa).

The disordered stretch occupies residues 1–44 (MSRFFTTGSDSESESSLSGEELVTKPVGGNYGKQPLLLSEDEED). Positions 8–21 (GSDSESESSLSGEE) are enriched in low complexity. S9, S11, S13, S15, S16, S18, and S39 each carry phosphoserine. The residue at position 99 (K99) is an N6-acetyllysine. Disordered regions lie at residues 157 to 301 (TSYK…GGEW) and 522 to 542 (QLTP…NEGE). S166, S178, S181, and S182 each carry phosphoserine. Positions 166–190 (SADEDAEKNEEDSEGSSDEDEDEDG) are enriched in acidic residues. Residues 199–216 (KKSEAPSGESRKFLKKMD) show a composition bias toward basic and acidic residues. Acidic residues predominate over residues 217-232 (DEDEDSEDSEDDEDWD). The segment covering 261–278 (PTTDEDKKAAEKKREDKA) has biased composition (basic and acidic residues). Residues 522 to 531 (QLTPPEGSSK) are compositionally biased toward polar residues. T524 carries the phosphothreonine modification. An N6-acetyllysine modification is found at K643. The PCI domain maps to 673-849 (FHLHINLELL…QTVVMHRTEP (177 aa)). The interval 885–913 (FRDQKDGYRKNEGYMRRGGYRQQQSQTAY) is disordered. The segment covering 886–899 (RDQKDGYRKNEGYM) has biased composition (basic and acidic residues). Residue S909 is modified to Phosphoserine.

The protein belongs to the eIF-3 subunit C family. In terms of assembly, component of the eukaryotic translation initiation factor 3 (eIF-3) complex, which is composed of 13 subunits: EIF3A, EIF3B, EIF3C, EIF3D, EIF3E, EIF3F, EIF3G, EIF3H, EIF3I, EIF3J, EIF3K, EIF3L and EIF3M. The eIF-3 complex appears to include 3 stable modules: module A is composed of EIF3A, EIF3B, EIF3G and EIF3I; module B is composed of EIF3F, EIF3H, and EIF3M; and module C is composed of EIF3C, EIF3D, EIF3E, EIF3K and EIF3L. EIF3C of module C binds EIF3B of module A and EIF3H of module B, thereby linking the three modules. EIF3J is a labile subunit that binds to the eIF-3 complex via EIF3B. The eIF-3 complex interacts with RPS6KB1 under conditions of nutrient depletion. Mitogenic stimulation leads to binding and activation of a complex composed of MTOR and RPTOR, leading to phosphorylation and release of RPS6KB1 and binding of EIF4B to eIF-3. Interacts with ALKBH4, IFIT1 and IFIT2. Interacts with BZW2/5MP1. Phosphorylated. Phosphorylation is enhanced upon serum stimulation.

The protein resides in the cytoplasm. Component of the eukaryotic translation initiation factor 3 (eIF-3) complex, which is required for several steps in the initiation of protein synthesis. The eIF-3 complex associates with the 40S ribosome and facilitates the recruitment of eIF-1, eIF-1A, eIF-2:GTP:methionyl-tRNAi and eIF-5 to form the 43S pre-initiation complex (43S PIC). The eIF-3 complex stimulates mRNA recruitment to the 43S PIC and scanning of the mRNA for AUG recognition. The eIF-3 complex is also required for disassembly and recycling of post-termination ribosomal complexes and subsequently prevents premature joining of the 40S and 60S ribosomal subunits prior to initiation. The eIF-3 complex specifically targets and initiates translation of a subset of mRNAs involved in cell proliferation, including cell cycling, differentiation and apoptosis, and uses different modes of RNA stem-loop binding to exert either translational activation or repression. This is Eukaryotic translation initiation factor 3 subunit C from Pongo abelii (Sumatran orangutan).